A 481-amino-acid polypeptide reads, in one-letter code: Aspartyl/glutamyl-tRNA(Asn/Gln) amidotransferase subunit B (481 aa).

The protein belongs to the GatB/GatE family. GatB subfamily. In terms of assembly, heterotrimer of A, B and C subunits.

The catalysed reaction is L-glutamyl-tRNA(Gln) + L-glutamine + ATP + H2O = L-glutaminyl-tRNA(Gln) + L-glutamate + ADP + phosphate + H(+). It carries out the reaction L-aspartyl-tRNA(Asn) + L-glutamine + ATP + H2O = L-asparaginyl-tRNA(Asn) + L-glutamate + ADP + phosphate + 2 H(+). Its function is as follows. Allows the formation of correctly charged Asn-tRNA(Asn) or Gln-tRNA(Gln) through the transamidation of misacylated Asp-tRNA(Asn) or Glu-tRNA(Gln) in organisms which lack either or both of asparaginyl-tRNA or glutaminyl-tRNA synthetases. The reaction takes place in the presence of glutamine and ATP through an activated phospho-Asp-tRNA(Asn) or phospho-Glu-tRNA(Gln). The polypeptide is Aspartyl/glutamyl-tRNA(Asn/Gln) amidotransferase subunit B (Cellvibrio japonicus (strain Ueda107) (Pseudomonas fluorescens subsp. cellulosa)).